A 365-amino-acid polypeptide reads, in one-letter code: Glycerol dehydrogenase (365 aa).

Residues aspartate 37, glycine 94, lysine 95, threonine 116, and serine 119 each contribute to the NAD(+) site. Aspartate 121 is a binding site for glycerol. 3 residues coordinate NAD(+): serine 125, leucine 127, and tyrosine 131. Residues aspartate 171, histidine 254, and histidine 271 each contribute to the Mn(2+) site. Residue histidine 254 participates in glycerol binding.

Belongs to the iron-containing alcohol dehydrogenase family. In terms of assembly, homohexamer. Mn(2+) is required as a cofactor.

It carries out the reaction glycerol + NAD(+) = dihydroxyacetone + NADH + H(+). It catalyses the reaction hydroxyacetone + NADH + H(+) = (S)-propane-1,2-diol + NAD(+). It functions in the pathway polyol metabolism; glycerol fermentation; glycerone phosphate from glycerol (oxidative route): step 1/2. Inhibited by zinc. Its function is as follows. Catalyzes the NAD-dependent oxidation of glycerol to dihydroxyacetone (glycerone). Allows microorganisms to utilize glycerol as a source of carbon under anaerobic conditions. Exhibits a rather broad substrate specificity since it can also oxidize 1,2-propanediol and 2,3-butanediol and reduce dihydroxyacetone. Cannot use NADP(+) as an electron acceptor for the oxidation of glycerol. The protein is Glycerol dehydrogenase of Citrobacter freundii.